The following is a 471-amino-acid chain: Putative multidrug resistance protein MdtD (471 aa).

Residues 1-11 lie on the Periplasmic side of the membrane; that stretch reads MTDLPDSTRWQ. Residues 12–32 form a helical membrane-spanning segment; that stretch reads LWIVAFGFFMQSLDTTIVNTA. Over 33–48 the chain is Cytoplasmic; sequence LPSMAQSLGESPLHMH. The helical transmembrane segment at 49-69 threads the bilayer; sequence MVIVSYVLTVAVMLPASGWLA. The Periplasmic portion of the chain corresponds to 70-76; that stretch reads DKVGVRN. The chain crosses the membrane as a helical span at residues 77 to 97; sequence IFFTAIVLFTLGSLFCALSGT. The Cytoplasmic portion of the chain corresponds to 98–101; it reads LNEL. The chain crosses the membrane as a helical span at residues 102–124; the sequence is LLARALQGVGGAMMVPVGRLTVM. At 125 to 137 the chain is on the periplasmic side; the sequence is KIVPREQYMAAMT. The helical transmembrane segment at 138–158 threads the bilayer; the sequence is FVTLPGQIGPLLGPALGGLLV. At 159–164 the chain is on the cytoplasmic side; it reads EYASWH. The helical transmembrane segment at 165–185 threads the bilayer; sequence WIFLINIPVGIIGAIATLMLM. The Periplasmic portion of the chain corresponds to 186-196; sequence PNYTMQTRRFD. Residues 197 to 217 form a helical membrane-spanning segment; it reads LSGFLLLAVGMAVLTLALDGS. Residues 218–224 are Cytoplasmic-facing; the sequence is KGTGFSP. The chain crosses the membrane as a helical span at residues 225 to 245; sequence LAIAGLVAVGVVALVLYLLHA. Residues 246-262 are Periplasmic-facing; the sequence is QNNNRALFSLKLFRTRT. Residues 263–283 form a helical membrane-spanning segment; sequence FSLGLAGSFAGRIGSGMLPFM. Over 284–285 the chain is Cytoplasmic; sequence TP. Residues 286–306 traverse the membrane as a helical segment; the sequence is VFLQIGLGFSPFHAGLMMIPM. Over 307–341 the chain is Periplasmic; it reads VLGSMGMKRIVVQVVNRFGYRWVLVATTLGLSLVT. Residues 342–362 form a helical membrane-spanning segment; sequence LLFMTTALLGWYYVLPFVLFL. Topologically, residues 363-395 are cytoplasmic; the sequence is QGMVNSTRFSSMNTLTLKDLPDNLASSGNSLLS. A helical membrane pass occupies residues 396–416; sequence MIMQLSMSIGVTIAGLLLGLF. The Periplasmic portion of the chain corresponds to 417-430; it reads GSQHVSVDSGTTQT. A helical transmembrane segment spans residues 431-451; the sequence is VFMYTWLSMAFIIALPAFVFA. Over 452–471 the chain is Cytoplasmic; the sequence is RVPSDTHQNVAISRRKRSAQ.

The protein belongs to the major facilitator superfamily. TCR/Tet family.

It is found in the cell inner membrane. This chain is Putative multidrug resistance protein MdtD, found in Escherichia coli O81 (strain ED1a).